Here is a 292-residue protein sequence, read N- to C-terminus: Coatomer subunit epsilon-1 (292 aa).

The protein belongs to the COPE family. Oligomeric complex that consists of at least the alpha, beta, beta', gamma, delta, epsilon and zeta subunits.

It is found in the cytoplasm. The protein localises to the golgi apparatus membrane. It localises to the cytoplasmic vesicle. The protein resides in the COPI-coated vesicle membrane. Functionally, the coatomer is a cytosolic protein complex that binds to dilysine motifs and reversibly associates with Golgi non-clathrin-coated vesicles, which further mediate biosynthetic protein transport from the ER, via the Golgi up to the trans Golgi network. The coatomer complex is required for budding from Golgi membranes, and is essential for the retrograde Golgi-to-ER transport of dilysine-tagged proteins. This is Coatomer subunit epsilon-1 from Arabidopsis thaliana (Mouse-ear cress).